The following is a 108-amino-acid chain: UPF0060 membrane protein Nham_2004 (108 aa).

4 helical membrane-spanning segments follow: residues 5–25 (AAYV…WAWL), 31–51 (VWWL…LTLV), 61–81 (AAYG…VEGL), and 88–108 (LTGA…PRQI).

It belongs to the UPF0060 family.

It localises to the cell inner membrane. In Nitrobacter hamburgensis (strain DSM 10229 / NCIMB 13809 / X14), this protein is UPF0060 membrane protein Nham_2004.